We begin with the raw amino-acid sequence, 108 residues long: Glutaredoxin-like protein YDR286C homolog (108 aa).

Cysteines 22 and 25 form a disulfide.

It belongs to the glutaredoxin family. YDR286C subfamily.

The sequence is that of Glutaredoxin-like protein YDR286C homolog from Dictyostelium discoideum (Social amoeba).